We begin with the raw amino-acid sequence, 377 residues long: Putative zinc metalloprotease Atu1380 (377 aa).

H29 is a Zn(2+) binding site. E30 is an active-site residue. Zn(2+) is bound at residue H33. 3 helical membrane passes run 118–140 (VAAG…FGIY), 299–321 (LGIS…LNLM), and 351–373 (VAFR…NDIS). The region spanning 129–202 (AILIFAVLFG…TPITVTVERA (74 aa)) is the PDZ domain.

The protein belongs to the peptidase M50B family. Requires Zn(2+) as cofactor.

Its subcellular location is the cell inner membrane. The protein is Putative zinc metalloprotease Atu1380 of Agrobacterium fabrum (strain C58 / ATCC 33970) (Agrobacterium tumefaciens (strain C58)).